We begin with the raw amino-acid sequence, 449 residues long: UDP-glycosyltransferase 76E7 (449 aa).

UDP-alpha-D-glucose contacts are provided by residues Ser275, 333–335 (APQ), 350–358 (HCGWNSTLE), and 372–375 (TTDQ).

Belongs to the UDP-glycosyltransferase family.

The chain is UDP-glycosyltransferase 76E7 (UGT76E7) from Arabidopsis thaliana (Mouse-ear cress).